The chain runs to 320 residues: MARKKIALIGAGQIGGTLAHLAGLKELGDVVLFDIADGVPQGKGLDIAESAPVDGFDAKYSGASDYSAIAGADVVIVTAGVPRKPGMSRDDLIGINLKVMEAVGTGIKTHAPNAFVICITNPLDAMVWALQKFSGLDPKKIVGMAGVLDSARFRHFLAEEFSVSVEDVTAFVLGGHGDDMVPLVRYSTVAGIPLPDLVKMGWTTQEKLDAMVERTRKGGGEIVNLLKTGSAFYAPAASAIAMAESYLKDKKRVLPCAAYLTGQYGVDGLFIGVPIVIGENGVERIVEVAFSAEEKAMFDKSVNSVKGLVEACKGINAALA.

Residues Gly-10 to Gly-15 and Asp-34 each bind NAD(+). The substrate site is built by Arg-83 and Arg-89. NAD(+) is bound by residues Asn-96 and Ile-119–Asn-121. Substrate-binding residues include Asn-121 and Arg-152. His-176 (proton acceptor) is an active-site residue.

It belongs to the LDH/MDH superfamily. MDH type 3 family.

It catalyses the reaction (S)-malate + NAD(+) = oxaloacetate + NADH + H(+). Catalyzes the reversible oxidation of malate to oxaloacetate. The protein is Malate dehydrogenase of Methylobacterium nodulans (strain LMG 21967 / CNCM I-2342 / ORS 2060).